The sequence spans 553 residues: Hydroxylamine reductase (553 aa).

[2Fe-2S] cluster-binding residues include cysteine 3, cysteine 6, cysteine 18, and cysteine 25. Residues histidine 249, glutamate 273, cysteine 317, cysteine 405, cysteine 433, cysteine 459, glutamate 493, and lysine 495 each coordinate hybrid [4Fe-2O-2S] cluster. Residue cysteine 405 is modified to Cysteine persulfide.

It belongs to the HCP family. [2Fe-2S] cluster serves as cofactor. It depends on hybrid [4Fe-2O-2S] cluster as a cofactor.

It is found in the cytoplasm. The enzyme catalyses A + NH4(+) + H2O = hydroxylamine + AH2 + H(+). Its function is as follows. Catalyzes the reduction of hydroxylamine to form NH(3) and H(2)O. The protein is Hydroxylamine reductase of Mannheimia succiniciproducens (strain KCTC 0769BP / MBEL55E).